Reading from the N-terminus, the 506-residue chain is MKKAEMGRFNISPDEDSSSYSSNSDFNYSYPTKQAALKSHYADVDPENQNFLLESNLGKKKYETEFHPGTTSFGMSVFNLSNAIVGSGILGLSYAMANTGIALFIILLTFVSIFSLYSVHLLLKTANEGGSLLYEQLGYKAFGLVGKLAASGSITMQNIGAMSSYLFIVKYELPLVIQALTNIEDKTGLWYLNGNYLVLLVSLVVILPLSLFRNLGYLGYTSGLSLLCMVFFLIVVICKKFQVPCPVEAALIINETINTTLTQPTALVPALSHNVTENDSCRPHYFIFNSQTVYAVPILIFSFVCHPAVLPIYEELKDRSRRRMMNVSKISFFAMFLMYLLAALFGYLTFYEHVESELLHTYSSILGTDILLLIVRLAVLMAVTLTVPVVIFPIRSSVTHLLCASKDFSWWRHSLITVSILAFTNLLVIFVPTIRDIFGFIGASAASMLIFILPSAFYIKLVKKEPMKSVQKIGALFFLLSGVLVMTGSMALIVLDWVHNAPGGGH.

Residues 1–23 (MKKAEMGRFNISPDEDSSSYSSN) form a disordered region. The Cytoplasmic segment spans residues 1–76 (MKKAEMGRFN…HPGTTSFGMS (76 aa)). The tract at residues 1–96 (MKKAEMGRFN…SGILGLSYAM (96 aa)) is regulates protein turnover upon amino acid deprivation. 4 positions are modified to phosphoserine: Ser12, Ser21, Ser22, and Ser55. The chain crosses the membrane as a helical span at residues 77–96 (VFNLSNAIVGSGILGLSYAM). A Na(+)-binding site is contributed by Asn82. Residues 97-102 (ANTGIA) lie on the Extracellular side of the membrane. The helical transmembrane segment at 103–123 (LFIILLTFVSIFSLYSVHLLL) threads the bilayer. At 124–158 (KTANEGGSLLYEQLGYKAFGLVGKLAASGSITMQN) the chain is on the cytoplasmic side. Residues 159-177 (IGAMSSYLFIVKYELPLVI) form a helical membrane-spanning segment. Residues 178-188 (QALTNIEDKTG) lie on the Extracellular side of the membrane. A helical membrane pass occupies residues 189-209 (LWYLNGNYLVLLVSLVVILPL). At 210–217 (SLFRNLGY) the chain is on the cytoplasmic side. A helical membrane pass occupies residues 218-238 (LGYTSGLSLLCMVFFLIVVIC). The Extracellular portion of the chain corresponds to 239–292 (KKFQVPCPVEAALIINETINTTLTQPTALVPALSHNVTENDSCRPHYFIFNSQT). Cysteines 245 and 281 form a disulfide. Asn258 and Asn274 each carry an N-linked (GlcNAc...) asparagine glycan. The helical transmembrane segment at 293-313 (VYAVPILIFSFVCHPAVLPIY) threads the bilayer. Residues 314–329 (EELKDRSRRRMMNVSK) lie on the Cytoplasmic side of the membrane. The helical transmembrane segment at 330–350 (ISFFAMFLMYLLAALFGYLTF) threads the bilayer. Topologically, residues 351–371 (YEHVESELLHTYSSILGTDIL) are extracellular. The helical transmembrane segment at 372–392 (LLIVRLAVLMAVTLTVPVVIF) threads the bilayer. Residue Thr386 coordinates Na(+). Topologically, residues 393–413 (PIRSSVTHLLCASKDFSWWRH) are cytoplasmic. The chain crosses the membrane as a helical span at residues 414-434 (SLITVSILAFTNLLVIFVPTI). At 435–436 (RD) the chain is on the extracellular side. The chain crosses the membrane as a helical span at residues 437–457 (IFGFIGASAASMLIFILPSAF). Topologically, residues 458–472 (YIKLVKKEPMKSVQK) are cytoplasmic. Residues 473–495 (IGALFFLLSGVLVMTGSMALIVL) traverse the membrane as a helical segment. Residues 496–506 (DWVHNAPGGGH) are Extracellular-facing.

This sequence belongs to the amino acid/polyamine transporter 2 family. Post-translationally, polyubiquitination by NEDD4L regulates the degradation and the activity of SLC38A2.

It localises to the cell membrane. The enzyme catalyses L-alanine(in) + Na(+)(in) = L-alanine(out) + Na(+)(out). It carries out the reaction glycine(in) + Na(+)(in) = glycine(out) + Na(+)(out). The catalysed reaction is L-serine(in) + Na(+)(in) = L-serine(out) + Na(+)(out). It catalyses the reaction L-proline(in) + Na(+)(in) = L-proline(out) + Na(+)(out). The enzyme catalyses L-methionine(in) + Na(+)(in) = L-methionine(out) + Na(+)(out). It carries out the reaction L-histidine(in) + Na(+)(in) = L-histidine(out) + Na(+)(out). The catalysed reaction is L-asparagine(in) + Na(+)(in) = L-asparagine(out) + Na(+)(out). It catalyses the reaction L-glutamine(in) + Na(+)(in) = L-glutamine(out) + Na(+)(out). The enzyme catalyses L-threonine(in) + Na(+)(in) = L-threonine(out) + Na(+)(out). It carries out the reaction L-leucine(in) + Na(+)(in) = L-leucine(out) + Na(+)(out). The catalysed reaction is L-phenylalanine(in) + Na(+)(in) = L-phenylalanine(out) + Na(+)(out). Its activity is regulated as follows. Inhibited by N-methyl-D-glucamine. Inhibited by choline. Allosteric regulation of sodium ions binding by pH. Symporter that cotransports neutral amino acids and sodium ions from the extracellular to the intracellular side of the cell membrane. The transport is pH-sensitive, Li(+)-intolerant, electrogenic, driven by the Na(+) electrochemical gradient and cotransports of neutral amino acids and sodium ions with a stoichiometry of 1:1. May function in the transport of amino acids at the blood-brain barrier. May function in the transport of amino acids in the supply of maternal nutrients to the fetus through the placenta. Maintains a key metabolic glutamine/glutamate balance underpinning retrograde signaling by dendritic release of the neurotransmitter glutamate. Transports L-proline in differentiating osteoblasts for the efficient synthesis of proline-enriched proteins and provides proline essential for osteoblast differentiation and bone formation during bone development. This is Sodium-coupled neutral amino acid symporter 2 from Pan paniscus (Pygmy chimpanzee).